The following is a 135-amino-acid chain: DNA-directed RNA polymerase subunit omega (135 aa).

This sequence belongs to the RNA polymerase subunit omega family. In terms of assembly, the RNAP catalytic core consists of 2 alpha, 1 beta, 1 beta' and 1 omega subunit. When a sigma factor is associated with the core the holoenzyme is formed, which can initiate transcription.

It catalyses the reaction RNA(n) + a ribonucleoside 5'-triphosphate = RNA(n+1) + diphosphate. Its function is as follows. Promotes RNA polymerase assembly. Latches the N- and C-terminal regions of the beta' subunit thereby facilitating its interaction with the beta and alpha subunits. The polypeptide is DNA-directed RNA polymerase subunit omega (Sinorhizobium medicae (strain WSM419) (Ensifer medicae)).